The following is a 263-amino-acid chain: 3-deoxy-manno-octulosonate cytidylyltransferase (263 aa).

It belongs to the KdsB family.

The protein localises to the cytoplasm. The enzyme catalyses 3-deoxy-alpha-D-manno-oct-2-ulosonate + CTP = CMP-3-deoxy-beta-D-manno-octulosonate + diphosphate. It functions in the pathway nucleotide-sugar biosynthesis; CMP-3-deoxy-D-manno-octulosonate biosynthesis; CMP-3-deoxy-D-manno-octulosonate from 3-deoxy-D-manno-octulosonate and CTP: step 1/1. Its pathway is bacterial outer membrane biogenesis; lipopolysaccharide biosynthesis. Its function is as follows. Activates KDO (a required 8-carbon sugar) for incorporation into bacterial lipopolysaccharide in Gram-negative bacteria. This is 3-deoxy-manno-octulosonate cytidylyltransferase from Burkholderia thailandensis (strain ATCC 700388 / DSM 13276 / CCUG 48851 / CIP 106301 / E264).